We begin with the raw amino-acid sequence, 953 residues long: Calcium-transporting ATPase type 2C member 1 (953 aa).

Residues 1-104 (MDNLLPQSRF…NEFDISEDEP (104 aa)) lie on the Cytoplasmic side of the membrane. Residues 105–125 (LWKKYISQFKNPLIMLLLASA) traverse the membrane as a helical segment. Residues 126-138 (VISVLMHQFDDAV) are Lumenal-facing. A helical transmembrane segment spans residues 139 to 157 (SITVAILIVVTVAFVQEYR). Topologically, residues 158 to 296 (SEKSLEELSK…APKTPLQKSM (139 aa)) are cytoplasmic. Residues 297–316 (DLLGKQLSFYSFGIIGIIML) traverse the membrane as a helical segment. Residues 317 to 328 (VGWLLGKDILEM) lie on the Lumenal side of the membrane. A helical transmembrane segment spans residues 329-346 (FTISVSLAVAAIPEGLPI). Ca(2+)-binding residues include Val337, Ala338, Ile340, and Glu342. Topologically, residues 347-733 (VVTVTLALGV…EEGKGIYNNI (387 aa)) are cytoplasmic. The active-site 4-aspartylphosphate intermediate is the Asp384. Mg(2+)-binding residues include Asp678 and Asp682. Residues 734–753 (KNFVRFQLSTSIAALTLISL) traverse the membrane as a helical segment. Topologically, residues 754-763 (ATLMNFPNPL) are lumenal. Residues 764-784 (NAMQILWINIIMDGPPAQSLG) traverse the membrane as a helical segment. Ca(2+) contacts are provided by Asn772 and Asp776. Topologically, residues 785–804 (VEPVDKDVIRKPPRNWKDSI) are cytoplasmic. The chain crosses the membrane as a helical span at residues 805 to 824 (LTKNLILKILVSSIIIVCGT). The Lumenal segment spans residues 825 to 842 (LFVFWRELRDNVITPRDT). A helical transmembrane segment spans residues 843–862 (TMTFTCFVFFDMFNALSSRS). Topologically, residues 863-875 (QTKSVFEIGLCSN) are cytoplasmic. The helical transmembrane segment at 876 to 894 (KMFCYAVLGSIMGQLLVIY) threads the bilayer. Residues 895-909 (FPPLQKVFQTESLSI) lie on the Lumenal side of the membrane. A helical membrane pass occupies residues 910 to 930 (LDLLFLLGLTSSVCIVAEIIK). Over 931-953 (KVERSREKIQKPVSSTSSSFLEV) the chain is Cytoplasmic.

It belongs to the cation transport ATPase (P-type) (TC 3.A.3) family. Type IIA subfamily. As to quaternary structure, monomer. Homodimer.

The protein resides in the golgi apparatus. It is found in the trans-Golgi network membrane. It localises to the golgi stack membrane. The enzyme catalyses Ca(2+)(in) + ATP + H2O = Ca(2+)(out) + ADP + phosphate + H(+). It catalyses the reaction Mn(2+)(in) + ATP + H2O = Mn(2+)(out) + ADP + phosphate + H(+). In terms of biological role, ATP-driven pump that supplies the Golgi apparatus with Ca(2+) and Mn(2+) ions, both essential cofactors for processing and trafficking of newly synthesized proteins in the secretory pathway. Within a catalytic cycle, acquires Ca(2+) or Mn(2+) ions on the cytoplasmic side of the membrane and delivers them to the lumenal side. The transfer of ions across the membrane is coupled to ATP hydrolysis and is associated with a transient phosphorylation that shifts the pump conformation from inward-facing to outward-facing state. Plays a primary role in the maintenance of Ca(2+) homeostasis in the trans-Golgi compartment with a functional impact on Golgi and post-Golgi protein sorting as well as a structural impact on cisternae morphology. Responsible for loading the Golgi stores with Ca(2+) ions in keratinocytes, contributing to keratinocyte differentiation and epidermis integrity. Participates in Ca(2+) and Mn(2+) ions uptake into the Golgi store of hippocampal neurons and regulates protein trafficking required for neural polarity. May also play a role in the maintenance of Ca(2+) and Mn(2+) homeostasis and signaling in the cytosol while preventing cytotoxicity. The sequence is that of Calcium-transporting ATPase type 2C member 1 (ATP2C1) from Bos taurus (Bovine).